Consider the following 442-residue polypeptide: L-seryl-tRNA(Sec) selenium transferase (442 aa).

K284 is modified (N6-(pyridoxal phosphate)lysine).

This sequence belongs to the SelA family. It depends on pyridoxal 5'-phosphate as a cofactor.

The protein localises to the cytoplasm. The catalysed reaction is L-seryl-tRNA(Sec) + selenophosphate + H(+) = L-selenocysteinyl-tRNA(Sec) + phosphate. The protein operates within aminoacyl-tRNA biosynthesis; selenocysteinyl-tRNA(Sec) biosynthesis; selenocysteinyl-tRNA(Sec) from L-seryl-tRNA(Sec) (bacterial route): step 1/1. In terms of biological role, converts seryl-tRNA(Sec) to selenocysteinyl-tRNA(Sec) required for selenoprotein biosynthesis. The protein is L-seryl-tRNA(Sec) selenium transferase of Campylobacter fetus subsp. fetus (strain 82-40).